The chain runs to 363 residues: Phospho-N-acetylmuramoyl-pentapeptide-transferase (363 aa).

Transmembrane regions (helical) follow at residues 13-33 (ISGIALASLLAVGLGTTAFFL), 49-69 (LPLLLCAMGSGVVGFWVIPLL), 95-115 (MGGIFFIPVGVIIACILSNFA), 119-139 (LAVSALTTSYGFIGWLDDWQI), 154-174 (LALQVGFAAVFCLWLMFNQPS), 183-203 (WVSFTLPLGFLFWPLAGFVLV), 224-244 (AIALLALGALIAPTAPGLMVF), 281-301 (AVALLTNTLVALFILSGIFFV), and 343-363 (ELQVVGVFYVIAAILAAICLA).

The protein belongs to the glycosyltransferase 4 family. MraY subfamily. The cofactor is Mg(2+).

The protein resides in the cell inner membrane. The catalysed reaction is UDP-N-acetyl-alpha-D-muramoyl-L-alanyl-gamma-D-glutamyl-meso-2,6-diaminopimeloyl-D-alanyl-D-alanine + di-trans,octa-cis-undecaprenyl phosphate = di-trans,octa-cis-undecaprenyl diphospho-N-acetyl-alpha-D-muramoyl-L-alanyl-D-glutamyl-meso-2,6-diaminopimeloyl-D-alanyl-D-alanine + UMP. It participates in cell wall biogenesis; peptidoglycan biosynthesis. In terms of biological role, catalyzes the initial step of the lipid cycle reactions in the biosynthesis of the cell wall peptidoglycan: transfers peptidoglycan precursor phospho-MurNAc-pentapeptide from UDP-MurNAc-pentapeptide onto the lipid carrier undecaprenyl phosphate, yielding undecaprenyl-pyrophosphoryl-MurNAc-pentapeptide, known as lipid I. This chain is Phospho-N-acetylmuramoyl-pentapeptide-transferase, found in Nostoc punctiforme (strain ATCC 29133 / PCC 73102).